The sequence spans 411 residues: DNA polymerase IV (411 aa).

The 194-residue stretch at 18–211 folds into the UmuC domain; it reads VVHVDMDCFY…LDVADLHGVG (194 aa). 2 residues coordinate Mg(2+): aspartate 22 and aspartate 130. The active site involves glutamate 131. Disordered stretches follow at residues 248 to 280 and 376 to 411; these read FHRR…GATE and GFSG…DEFT. Basic and acidic residues predominate over residues 253–274; it reads RGADSRPVEPRGKPKSLSRESS. Gly residues predominate over residues 384-402; the sequence is DGGGHEGGACGGAGRGSCG.

This sequence belongs to the DNA polymerase type-Y family. In terms of assembly, monomer. Requires Mg(2+) as cofactor.

The protein localises to the cytoplasm. It catalyses the reaction DNA(n) + a 2'-deoxyribonucleoside 5'-triphosphate = DNA(n+1) + diphosphate. Poorly processive, error-prone DNA polymerase involved in untargeted mutagenesis. Copies undamaged DNA at stalled replication forks, which arise in vivo from mismatched or misaligned primer ends. These misaligned primers can be extended by PolIV. Exhibits no 3'-5' exonuclease (proofreading) activity. May be involved in translesional synthesis. The polypeptide is DNA polymerase IV (Halobacterium salinarum (strain ATCC 29341 / DSM 671 / R1)).